A 171-amino-acid chain; its full sequence is UPF0312 protein SE_0264 (171 aa).

It belongs to the UPF0312 family.

This chain is UPF0312 protein SE_0264, found in Staphylococcus epidermidis (strain ATCC 12228 / FDA PCI 1200).